A 152-amino-acid polypeptide reads, in one-letter code: Superoxide dismutase [Cu-Zn] 2 (152 aa).

N9 and N33 each carry an N-linked (GlcNAc...) asparagine glycan. The Cu cation site is built by H45, H47, and H62. Cysteines 56 and 145 form a disulfide. Zn(2+) contacts are provided by H62, H70, H79, and D82. N85 carries an N-linked (GlcNAc...) asparagine glycan. H119 serves as a coordination point for Cu cation.

This sequence belongs to the Cu-Zn superoxide dismutase family. Cu cation is required as a cofactor. The cofactor is Zn(2+). Expressed in fruits, leaves and pollen grains.

Its subcellular location is the cytoplasm. It is found in the endoplasmic reticulum. It carries out the reaction 2 superoxide + 2 H(+) = H2O2 + O2. Its activity is regulated as follows. Inhibited by KCN and H(2)O(2). Destroys radicals which are normally produced within the cells and which are toxic to biological systems. Probably involved in the protection against oxidative stress during pollen development. The protein is Superoxide dismutase [Cu-Zn] 2 (OLE5) of Olea europaea (Common olive).